A 409-amino-acid chain; its full sequence is Epoxyqueuosine reductase (409 aa).

Residues 1–23 (MDRNPELAIADARPSQDGRAAPS) are disordered. Aspartate 178 serves as the catalytic Proton donor. One can recognise a 4Fe-4S ferredoxin-type domain in the interval 232 to 261 (AAPETPGAHCGSCTRCLGACPTGAIVAPYR). 8 residues coordinate [4Fe-4S] cluster: cysteine 241, cysteine 244, cysteine 247, cysteine 251, cysteine 267, cysteine 294, cysteine 297, and cysteine 301.

This sequence belongs to the QueG family. In terms of assembly, monomer. It depends on cob(II)alamin as a cofactor. [4Fe-4S] cluster is required as a cofactor.

Its subcellular location is the cytoplasm. The enzyme catalyses epoxyqueuosine(34) in tRNA + AH2 = queuosine(34) in tRNA + A + H2O. Its pathway is tRNA modification; tRNA-queuosine biosynthesis. Its function is as follows. Catalyzes the conversion of epoxyqueuosine (oQ) to queuosine (Q), which is a hypermodified base found in the wobble positions of tRNA(Asp), tRNA(Asn), tRNA(His) and tRNA(Tyr). This chain is Epoxyqueuosine reductase, found in Burkholderia pseudomallei (strain K96243).